Consider the following 575-residue polypeptide: MSNQERQERPEKDPDLRSTEVTEGYEKAPHRAMFRAMGYDDEDLSSPMIGVANPAADITPCNVHLDDVADAAYDGIDDTEGMPIEFGTITISDAISMGTEGMKASLISREIIADSVELVTFGERMDGIVTIGGCDKNMPGMMMAAIRTDLPSVFLYGGSIMPGEHDGREVTIQNVFEGVGAVADGEMSEGELDEMERHACPGAGSCGGMFTANTMASISEALGFAPLGSASPPAEHESRYEEARRAGELAVEVVQERRSPSDFLTRESFENAIALQVAVGGSTNAVLHLLALAAEAGIDLDIETFNEISARTPKIADLQPGGERVMNDLHEVGGVPVVLRALNDAGLLHGDALTVTGNTIAEELEQIDPPTVEDLDVDYLNTVEDPIHERGAIRILSGNLAPDGAVIKITGEDHLHHEGPVRVFEQEEGAMEYVQEGHVESGDVICIRNEGPQGGPGMREMLGVTSAVAGQGHAEDVALFTDGRFSGATRGFSIGHVAPEAFVGGPIAALEDGDTITIDIDDHELSVDLTEDEMQQRLEGHDPEPTYDSGVLAKYHNDFGSAANGAVTNPGAKWD.

Residues 1–27 (MSNQERQERPEKDPDLRSTEVTEGYEK) are disordered. Residue C61 coordinates [2Fe-2S] cluster. Position 93 (D93) interacts with Mg(2+). [2Fe-2S] cluster is bound at residue C134. 2 residues coordinate Mg(2+): D135 and K136. At K136 the chain carries N6-carboxylysine. C206 is a [2Fe-2S] cluster binding site. E460 serves as a coordination point for Mg(2+). The active-site Proton acceptor is S486.

Belongs to the IlvD/Edd family. In terms of assembly, homodimer. [2Fe-2S] cluster serves as cofactor. Requires Mg(2+) as cofactor.

It carries out the reaction (2R)-2,3-dihydroxy-3-methylbutanoate = 3-methyl-2-oxobutanoate + H2O. The enzyme catalyses (2R,3R)-2,3-dihydroxy-3-methylpentanoate = (S)-3-methyl-2-oxopentanoate + H2O. It participates in amino-acid biosynthesis; L-isoleucine biosynthesis; L-isoleucine from 2-oxobutanoate: step 3/4. The protein operates within amino-acid biosynthesis; L-valine biosynthesis; L-valine from pyruvate: step 3/4. Functions in the biosynthesis of branched-chain amino acids. Catalyzes the dehydration of (2R,3R)-2,3-dihydroxy-3-methylpentanoate (2,3-dihydroxy-3-methylvalerate) into 2-oxo-3-methylpentanoate (2-oxo-3-methylvalerate) and of (2R)-2,3-dihydroxy-3-methylbutanoate (2,3-dihydroxyisovalerate) into 2-oxo-3-methylbutanoate (2-oxoisovalerate), the penultimate precursor to L-isoleucine and L-valine, respectively. The protein is Dihydroxy-acid dehydratase of Haloarcula marismortui (strain ATCC 43049 / DSM 3752 / JCM 8966 / VKM B-1809) (Halobacterium marismortui).